Consider the following 565-residue polypeptide: Putative ribonucleoside-diphosphate reductase large subunit (565 aa).

Residues Ser60, 74 to 75 (SC), Gly103, 256 to 260 (NLCNE), and 400 to 404 (PNANS) each bind substrate. Cysteines 75 and 273 form a disulfide. Catalysis depends on Asn256, which acts as the Proton acceptor. Cys258 functions as the Cysteine radical intermediate in the catalytic mechanism. Catalysis depends on Glu260, which acts as the Proton acceptor.

The protein belongs to the ribonucleoside diphosphate reductase large chain family. Heterotetramer composed of a homodimer of the large subunit (R1) and a homodimer of the small subunit (R2). Larger multisubunit protein complex are also active, composed of (R1)n(R2)n.

The catalysed reaction is a 2'-deoxyribonucleoside 5'-diphosphate + [thioredoxin]-disulfide + H2O = a ribonucleoside 5'-diphosphate + [thioredoxin]-dithiol. Under complex allosteric control mediated by deoxynucleoside triphosphates and ATP binding. The type of nucleotide bound at the specificity site determines substrate preference. It seems probable that ATP makes the enzyme reduce CDP and UDP, dGTP favors ADP reduction and dTTP favors GDP reduction. Ribonucleoside-diphosphate reductase holoenzyme provides the precursors necessary for viral DNA synthesis. Allows virus growth in non-dividing cells. Catalyzes the biosynthesis of deoxyribonucleotides from the corresponding ribonucleotides. The chain is Putative ribonucleoside-diphosphate reductase large subunit from Frog virus 3 (isolate Goorha) (FV-3).